The primary structure comprises 121 residues: Large ribosomal subunit protein bL12 (121 aa).

The protein belongs to the bacterial ribosomal protein bL12 family. In terms of assembly, homodimer. Part of the ribosomal stalk of the 50S ribosomal subunit. Forms a multimeric L10(L12)X complex, where L10 forms an elongated spine to which 2 to 4 L12 dimers bind in a sequential fashion. Binds GTP-bound translation factors.

Its function is as follows. Forms part of the ribosomal stalk which helps the ribosome interact with GTP-bound translation factors. Is thus essential for accurate translation. In Xanthomonas euvesicatoria pv. vesicatoria (strain 85-10) (Xanthomonas campestris pv. vesicatoria), this protein is Large ribosomal subunit protein bL12.